The sequence spans 404 residues: Cysteine desulfurase IscS (404 aa).

Pyridoxal 5'-phosphate-binding positions include 75-76 (AT), asparagine 155, glutamine 183, and 203-205 (SAH). Lysine 206 is modified (N6-(pyridoxal phosphate)lysine). Threonine 243 lines the pyridoxal 5'-phosphate pocket. The active-site Cysteine persulfide intermediate is the cysteine 328. Cysteine 328 serves as a coordination point for [2Fe-2S] cluster.

It belongs to the class-V pyridoxal-phosphate-dependent aminotransferase family. NifS/IscS subfamily. Homodimer. Forms a heterotetramer with IscU, interacts with other sulfur acceptors. The cofactor is pyridoxal 5'-phosphate.

The protein resides in the cytoplasm. It catalyses the reaction (sulfur carrier)-H + L-cysteine = (sulfur carrier)-SH + L-alanine. The protein operates within cofactor biosynthesis; iron-sulfur cluster biosynthesis. Functionally, master enzyme that delivers sulfur to a number of partners involved in Fe-S cluster assembly, tRNA modification or cofactor biosynthesis. Catalyzes the removal of elemental sulfur atoms from cysteine to produce alanine. Functions as a sulfur delivery protein for Fe-S cluster synthesis onto IscU, an Fe-S scaffold assembly protein, as well as other S acceptor proteins. The sequence is that of Cysteine desulfurase IscS from Pseudomonas fluorescens (strain ATCC BAA-477 / NRRL B-23932 / Pf-5).